The primary structure comprises 89 residues: Small ribosomal subunit protein uS15 (89 aa).

Belongs to the universal ribosomal protein uS15 family. Part of the 30S ribosomal subunit. Forms a bridge to the 50S subunit in the 70S ribosome, contacting the 23S rRNA.

Functionally, one of the primary rRNA binding proteins, it binds directly to 16S rRNA where it helps nucleate assembly of the platform of the 30S subunit by binding and bridging several RNA helices of the 16S rRNA. In terms of biological role, forms an intersubunit bridge (bridge B4) with the 23S rRNA of the 50S subunit in the ribosome. The sequence is that of Small ribosomal subunit protein uS15 from Bordetella parapertussis (strain 12822 / ATCC BAA-587 / NCTC 13253).